A 247-amino-acid polypeptide reads, in one-letter code: Ubiquinone biosynthesis O-methyltransferase (247 aa).

Residues R45, G65, D86, and L130 each contribute to the S-adenosyl-L-methionine site.

The protein belongs to the methyltransferase superfamily. UbiG/COQ3 family.

It carries out the reaction a 3-demethylubiquinol + S-adenosyl-L-methionine = a ubiquinol + S-adenosyl-L-homocysteine + H(+). The catalysed reaction is a 3-(all-trans-polyprenyl)benzene-1,2-diol + S-adenosyl-L-methionine = a 2-methoxy-6-(all-trans-polyprenyl)phenol + S-adenosyl-L-homocysteine + H(+). It participates in cofactor biosynthesis; ubiquinone biosynthesis. In terms of biological role, O-methyltransferase that catalyzes the 2 O-methylation steps in the ubiquinone biosynthetic pathway. This Alkalilimnicola ehrlichii (strain ATCC BAA-1101 / DSM 17681 / MLHE-1) protein is Ubiquinone biosynthesis O-methyltransferase.